The following is a 274-amino-acid chain: Pyrogallol hydroxytransferase small subunit (274 aa).

12 residues coordinate [4Fe-4S] cluster: cysteine 13, cysteine 16, cysteine 19, cysteine 23, cysteine 68, cysteine 71, cysteine 76, cysteine 109, cysteine 126, cysteine 129, cysteine 145, and cysteine 149.

As to quaternary structure, heterodimer of a large and a small subunit. It depends on [4Fe-4S] cluster as a cofactor.

The catalysed reaction is 1,2,3,5-tetrahydroxybenzene + 1,2,3-trihydroxybenzene = 1,2,3,5-tetrahydroxybenzene + 1,3,5-trihydroxybenzene. In terms of biological role, isomerization of pyrogallol to phloroglucin. The chain is Pyrogallol hydroxytransferase small subunit (bthL) from Pelobacter acidigallici.